Here is a 1453-residue protein sequence, read N- to C-terminus: Chromatin remodeling regulator CECR2 (1453 aa).

The disordered stretch occupies residues 170-237; sequence VQGRSNGELS…DLQTRNGSRG (68 aa). Residues 197 to 209 are compositionally biased toward basic residues; that stretch reads TGKRRGRPPKRKK. Positions 210–222 are enriched in basic and acidic residues; sequence LQEEIISSEKQEE. A compositionally biased stretch (polar residues) spans 223–234; it reads NSLTSDLQTRNG. S402 is subject to Phosphoserine. One can recognise a Bromo domain in the interval 414-518; sequence FELDDDFTAM…RCFHRAMTKH (105 aa). The residue at position 526 (T526) is a Phosphothreonine. Disordered regions lie at residues 536 to 667, 767 to 796, 827 to 868, 884 to 1020, 1046 to 1072, 1131 to 1308, 1331 to 1368, and 1396 to 1453; these read EKRE…HPPF, HGTT…TLGH, GYMQ…GESM, VCPP…DNSY, VVGE…LCPR, LASM…YLYG, MLQT…VATQ, and QTGT…LDQS. The residue at position 551 (S551) is a Phosphoserine. Positions 637-649 are enriched in polar residues; the sequence is GSLQGSDPTNLHG. Residues 655–664 are compositionally biased toward pro residues; it reads EAPPGEPLQH. The segment covering 887–905 has biased composition (pro residues); that stretch reads PGVPYHPRQPTPPQLPGPF. S983 is subject to Phosphoserine. Residues 985 to 998 show a composition bias toward basic and acidic residues; it reads QERETEDSQLKSDA. A compositionally biased stretch (polar residues) spans 999–1020; that stretch reads SDSADTYKTSKNKNTWPLDNSY. Asymmetric dimethylarginine is present on residues R1166 and R1172. Low complexity-rich tracts occupy residues 1173–1187 and 1202–1211; these read YSYQ…HPYQ and QRSLPSQRSP. Residues 1228–1250 show a composition bias toward polar residues; the sequence is NVLSSLQGCETLNTALTSPTQMD. Basic and acidic residues predominate over residues 1265–1289; it reads GPEEEKMDESVERPESPKEFLDLDN. Position 1280 is a phosphoserine (S1280). Composition is skewed to polar residues over residues 1291-1304 and 1331-1346; these read NAAT…STSD and MLQT…SASH. Positions 1352 to 1364 are enriched in pro residues; sequence YPSPVPAHPPPHP.

As to quaternary structure, component of the CERF-1 ISWI chromatin remodeling complex (also called the CECR2-containing remodeling factor (CERF) complex) at least composed of CECR2 and SMARCA1. Component of the CERF-5 ISWI chromatin remodeling complex at least composed of CECR2 and SMARCA5/SNF2H. LUZP1 is detected as part of the CERF-1 and CERF-5 complexes in embryonic stem (ES) cells where it is involved in complex stabilization but is not detected in the complexes in the testis. Interacts with CCAR2; CCAR2 may form part of the CERF-1 and/or CEF-5 ISWI chromatin remodeling complexes in ES cells. Interacts with acetylated lysine residues on histone H2A and H3 (in vitro). Interacts with LRPPRC.

The protein resides in the nucleus. Its function is as follows. Regulatory subunit of the ATP-dependent CERF-1 and CERF-5 ISWI chromatin remodeling complexes, which form ordered nucleosome arrays on chromatin and facilitate access to DNA during DNA-templated processes such as DNA replication, transcription, and repair. The complexes do not have the ability to slide mononucleosomes to the center of a DNA template. The CERF-1 ISWI chromatin remodeling complex has a lower ATP hydrolysis rate than the CERF-5 ISWI chromatin remodeling complex. Plays a role in various processes during development: required during embryogenesis for neural tube closure and inner ear development. In adults, required for spermatogenesis, via the formation of ISWI-type chromatin complexes. In histone-modifying complexes, CECR2 recognizes and binds acylated histones: binds histones that are acetylated and/or butyrylated. May also be involved through its interaction with LRPPRC in the integration of cytoskeletal network with vesicular trafficking, nucleocytosolic shuttling, transcription, chromosome remodeling and cytokinesis. This is Chromatin remodeling regulator CECR2 from Mus musculus (Mouse).